Reading from the N-terminus, the 189-residue chain is Transcription factor FapR (189 aa).

The protein belongs to the FapR family.

Transcriptional factor involved in regulation of membrane lipid biosynthesis by repressing genes involved in fatty acid and phospholipid metabolism. This Listeria innocua serovar 6a (strain ATCC BAA-680 / CLIP 11262) protein is Transcription factor FapR.